Reading from the N-terminus, the 98-residue chain is NADH-ubiquinone oxidoreductase chain 4L (98 aa).

Transmembrane regions (helical) follow at residues 1–21 (MSPL…GLAF), 26–46 (LISA…PLSI), and 56–76 (FALV…TGLA).

This sequence belongs to the complex I subunit 4L family. In terms of assembly, core subunit of respiratory chain NADH dehydrogenase (Complex I) which is composed of 45 different subunits.

It is found in the mitochondrion inner membrane. It catalyses the reaction a ubiquinone + NADH + 5 H(+)(in) = a ubiquinol + NAD(+) + 4 H(+)(out). Core subunit of the mitochondrial membrane respiratory chain NADH dehydrogenase (Complex I) which catalyzes electron transfer from NADH through the respiratory chain, using ubiquinone as an electron acceptor. Part of the enzyme membrane arm which is embedded in the lipid bilayer and involved in proton translocation. In Gallus gallus (Chicken), this protein is NADH-ubiquinone oxidoreductase chain 4L (MT-ND4L).